Here is a 473-residue protein sequence, read N- to C-terminus: Tubulin gamma chain (473 aa).

The segment at 33–56 (TDGLSQLPDSSTERDDDTKPFFRE) is disordered. The span at 43–56 (STERDDDTKPFFRE) shows a compositional bias: basic and acidic residues. 143–149 (AGGTGSG) lines the GTP pocket.

It belongs to the tubulin family. Interacts with SPC72, SPC97 and SPC98.

The protein localises to the cytoplasm. Its subcellular location is the cytoskeleton. The protein resides in the microtubule organizing center. It is found in the spindle pole body. Functionally, tubulin is the major constituent of microtubules. The gamma chain is found at microtubule organizing centers (MTOC) such as the spindle poles or the centrosome, suggesting that it is involved in the minus-end nucleation of microtubule assembly. TUB4 is an important spindle pole body component that organizes both cytoplasmic and nuclear microtubule arrays. This chain is Tubulin gamma chain (TUB4), found in Saccharomyces cerevisiae (strain ATCC 204508 / S288c) (Baker's yeast).